The chain runs to 203 residues: Recombination protein RecR (203 aa).

Residues 57-73 (CQSCGTLKSNSLGCNNC) form a C4-type zinc finger. Positions 81 to 175 (NKICVVEDIA…KVTKLAQGLP (95 aa)) constitute a Toprim domain.

The protein belongs to the RecR family.

May play a role in DNA repair. It seems to be involved in an RecBC-independent recombinational process of DNA repair. It may act with RecF and RecO. The protein is Recombination protein RecR of Pelagibacter ubique (strain HTCC1062).